Consider the following 557-residue polypeptide: Potassium-transporting ATPase potassium-binding subunit (557 aa).

Transmembrane regions (helical) follow at residues 4–24, 61–81, 131–151, 174–194, 253–273, 280–300, 375–395, 412–432, 483–503, and 528–548; these read LGAG…VHVP, TYAL…YAFL, GLTV…VALV, LRVL…TGVV, LEVF…GTLV, LAVL…TTWA, GLYG…LMVG, CAAL…AVAL, LAIW…AGAF, and LAVV…LGPI.

The protein belongs to the KdpA family. In terms of assembly, the system is composed of three essential subunits: KdpA, KdpB and KdpC.

The protein localises to the cell membrane. Functionally, part of the high-affinity ATP-driven potassium transport (or Kdp) system, which catalyzes the hydrolysis of ATP coupled with the electrogenic transport of potassium into the cytoplasm. This subunit binds the extracellular potassium ions and delivers the ions to the membrane domain of KdpB through an intramembrane tunnel. The polypeptide is Potassium-transporting ATPase potassium-binding subunit (Kineococcus radiotolerans (strain ATCC BAA-149 / DSM 14245 / SRS30216)).